The primary structure comprises 278 residues: Elongation factor Ts (278 aa).

Positions 82–85 (TEPV) are involved in Mg(2+) ion dislocation from EF-Tu.

It belongs to the EF-Ts family.

Its subcellular location is the cytoplasm. Functionally, associates with the EF-Tu.GDP complex and induces the exchange of GDP to GTP. It remains bound to the aminoacyl-tRNA.EF-Tu.GTP complex up to the GTP hydrolysis stage on the ribosome. The polypeptide is Elongation factor Ts (Cytophaga hutchinsonii (strain ATCC 33406 / DSM 1761 / CIP 103989 / NBRC 15051 / NCIMB 9469 / D465)).